Reading from the N-terminus, the 443-residue chain is Threonine/serine transporter TdcC (443 aa).

11 helical membrane passes run 22–42 (TTWT…FFPI), 44–64 (AGFG…PIAF), 97–117 (GVVI…IYGV), 140–160 (FVAL…KDLM), 163–183 (VMSY…LSLI), 207–227 (ILIT…FSPI), 261–281 (MLMV…LSPA), 311–331 (FAIT…FKSF), 366–386 (LSMI…PNIL), 389–409 (IEAM…MYAI), and 423–443 (DNVF…YKLF).

The protein belongs to the amino acid/polyamine transporter 2 family. SdaC/TdcC subfamily.

The protein localises to the cell inner membrane. It catalyses the reaction L-threonine(in) + H(+)(in) = L-threonine(out) + H(+)(out). The enzyme catalyses L-serine(in) + H(+)(in) = L-serine(out) + H(+)(out). Its function is as follows. Involved in the import of threonine and serine into the cell, with the concomitant import of a proton (symport system). The polypeptide is Threonine/serine transporter TdcC (Shigella flexneri serotype 5b (strain 8401)).